The following is a 333-amino-acid chain: Tetraacyldisaccharide 4'-kinase (333 aa).

55-62 (TAGGNGKT) contacts ATP.

The protein belongs to the LpxK family.

The catalysed reaction is a lipid A disaccharide + ATP = a lipid IVA + ADP + H(+). It participates in glycolipid biosynthesis; lipid IV(A) biosynthesis; lipid IV(A) from (3R)-3-hydroxytetradecanoyl-[acyl-carrier-protein] and UDP-N-acetyl-alpha-D-glucosamine: step 6/6. Transfers the gamma-phosphate of ATP to the 4'-position of a tetraacyldisaccharide 1-phosphate intermediate (termed DS-1-P) to form tetraacyldisaccharide 1,4'-bis-phosphate (lipid IVA). The chain is Tetraacyldisaccharide 4'-kinase from Proteus mirabilis (strain HI4320).